Here is a 380-residue protein sequence, read N- to C-terminus: Flap endonuclease 1 (380 aa).

An N-domain region spans residues 1–104 (MGIHGLTKLI…AELEKRGEKR (104 aa)). A Mg(2+)-binding site is contributed by D34. Residues R47 and R70 each contribute to the DNA site. Mg(2+)-binding residues include D86, E158, E160, D179, and D181. An I-domain region spans residues 122 to 253 (NIDKFSKRLV…KRAIDLIKQH (132 aa)). A DNA-binding site is contributed by E158. Residues G231 and D233 each contribute to the DNA site. D233 contributes to the Mg(2+) binding site. Residues 336–344 (TQGRLDSFF) are interaction with PCNA. Positions 351–380 (SSKRKEPELKGSAKKKQKTGATPGKFKKGK) are disordered.

This sequence belongs to the XPG/RAD2 endonuclease family. FEN1 subfamily. As to quaternary structure, interacts with PCNA. Three molecules of fen1 bind to one PCNA trimer with each molecule binding to one PCNA monomer. PCNA stimulates the nuclease activity without altering cleavage specificity. Requires Mg(2+) as cofactor. In terms of processing, phosphorylated. Phosphorylation upon DNA damage induces relocalization to the nuclear plasma.

It is found in the nucleus. The protein resides in the nucleolus. The protein localises to the nucleoplasm. Its subcellular location is the mitochondrion. Functionally, structure-specific nuclease with 5'-flap endonuclease and 5'-3' exonuclease activities involved in DNA replication and repair. During DNA replication, cleaves the 5'-overhanging flap structure that is generated by displacement synthesis when DNA polymerase encounters the 5'-end of a downstream Okazaki fragment. It enters the flap from the 5'-end and then tracks to cleave the flap base, leaving a nick for ligation. Also involved in the long patch base excision repair (LP-BER) pathway, by cleaving within the apurinic/apyrimidinic (AP) site-terminated flap. Acts as a genome stabilization factor that prevents flaps from equilibrating into structures that lead to duplications and deletions. Also possesses 5'-3' exonuclease activity on nicked or gapped double-stranded DNA, and exhibits RNase H activity. Also involved in replication and repair of rDNA and in repairing mitochondrial DNA. This Anoplopoma fimbria (Sablefish) protein is Flap endonuclease 1 (fen1).